The chain runs to 593 residues: Vicilin Jug r 2.0101 (593 aa).

2 stretches are compositionally biased toward basic and acidic residues: residues 46-76 (LEED…EQRY) and 97-118 (RRCE…DRQD). Positions 46-123 (LEEDQRSQEE…RDRQDPQQQY (78 aa)) are disordered. IgE-binding stretches follow at residues 49-58 (DQRSQEERER), 76-85 (YEQCQQQCER), and 101-110 (QRRQQEERER). Residues 140–149 (QRQCQQRCER) form an igE-binding. Involved in cross-reactivity with peanut allergen Ara h 2; able to inhibit binding of IgE from a peanut-allergic patient to Ara h 2 region. A compositionally biased stretch (basic and acidic residues) spans 150–178 (QYKEQQGRERGPEASPRRESRGREEEQQR). A disordered region spans residues 150–184 (QYKEQQGRERGPEASPRRESRGREEEQQRHNPYYF). 2 T-cell epitope; recognized by the HLA-DRB1-restricted CD4(+) T-cells regions span residues 175–193 (EQQR…RSRH) and 206–225 (FTER…VILD). A Cu cation-binding site is contributed by Y182. Cupin type-1 domains follow at residues 187–341 (QSIR…DRLE) and 386–556 (ISLK…EEIE). N-linked (GlcNAc...) asparagine glycosylation is present at N229. T-cell epitope; recognized by the HLA-DRB1-restricted CD4(+) T-cells stretches follow at residues 246–265 (TRGR…SFNL), 302–321 (PGQF…QSYL), 318–337 (QSYL…NTPR), 382–401 (SGGP…QFGQ), 414–433 (QEMD…MMVP), and 438–457 (KATV…MACP). Residues C456 and H458 each contribute to the Cu cation site. The igE-binding stretch occupies residues 463–470 (SYEGQGRR). The segment at 478-497 (TGRFQKVTARLARGDIFVIP) is T-cell epitope; recognized by the HLA-DRB1-restricted CD4(+) T-cells. H500 contacts Cu cation. Positions 529-556 (LAGQNNIINQLEREAKELSFNMPREEIE) form a coiled coil. An igE-binding region spans residues 541–555 (REAKELSFNMPREEI). T-cell epitope; recognized by the HLA-DRB1-restricted CD4(+) T-cells regions lie at residues 542–561 (EAKE…IFES) and 558–577 (IFES…SRRG).

It belongs to the 7S seed storage protein family. Proteolytically cleaved. Expressed in seed (at protein level).

In terms of biological role, seed storage protein. In Juglans regia (English walnut), this protein is Vicilin Jug r 2.0101.